A 397-amino-acid chain; its full sequence is Chorismate synthase (397 aa).

2 residues coordinate NADP(+): arginine 40 and arginine 46. FMN-binding positions include 129–131, 257–258, glycine 302, 317–321, and arginine 343; these read RSS, QA, and KPISS.

This sequence belongs to the chorismate synthase family. As to quaternary structure, homotetramer. The cofactor is FMNH2.

The enzyme catalyses 5-O-(1-carboxyvinyl)-3-phosphoshikimate = chorismate + phosphate. The protein operates within metabolic intermediate biosynthesis; chorismate biosynthesis; chorismate from D-erythrose 4-phosphate and phosphoenolpyruvate: step 7/7. Catalyzes the anti-1,4-elimination of the C-3 phosphate and the C-6 proR hydrogen from 5-enolpyruvylshikimate-3-phosphate (EPSP) to yield chorismate, which is the branch point compound that serves as the starting substrate for the three terminal pathways of aromatic amino acid biosynthesis. This reaction introduces a second double bond into the aromatic ring system. The sequence is that of Chorismate synthase from Chlorobium limicola (strain DSM 245 / NBRC 103803 / 6330).